A 588-amino-acid polypeptide reads, in one-letter code: Sperm-associated microtubule inner protein 4 (588 aa).

Threonine 219 is subject to Phosphothreonine. Serine 406, serine 421, and serine 427 each carry phosphoserine. A Phosphotyrosine modification is found at tyrosine 441. Serine 457, serine 484, and serine 516 each carry phosphoserine.

As to expression, predominantly expressed in the testes.

Its subcellular location is the cytoplasm. It is found in the cytoskeleton. The protein localises to the microtubule organizing center. It localises to the centrosome. The protein resides in the flagellum axoneme. In terms of biological role, microtubule inner protein (MIP) part of the dynein-decorated doublet microtubules (DMTs) in flagellum axoneme. May serve to reinforce and thus stabilize the microtubule structure in the sperm flagella. The chain is Sperm-associated microtubule inner protein 4 (Spmip4) from Mus musculus (Mouse).